The sequence spans 58 residues: Putative transcript Y 13 protein (58 aa).

Residues 17–37 (LLGWDLNLSLFLGLCLMLLLA) traverse the membrane as a helical segment.

The protein resides in the membrane. The polypeptide is Putative transcript Y 13 protein (TTTY13) (Homo sapiens (Human)).